The sequence spans 91 residues: DNA-directed RNA polymerase subunit omega (91 aa).

The protein belongs to the RNA polymerase subunit omega family. In terms of assembly, the RNAP catalytic core consists of 2 alpha, 1 beta, 1 beta' and 1 omega subunit. When a sigma factor is associated with the core the holoenzyme is formed, which can initiate transcription.

It catalyses the reaction RNA(n) + a ribonucleoside 5'-triphosphate = RNA(n+1) + diphosphate. Promotes RNA polymerase assembly. Latches the N- and C-terminal regions of the beta' subunit thereby facilitating its interaction with the beta and alpha subunits. The polypeptide is DNA-directed RNA polymerase subunit omega (Photorhabdus laumondii subsp. laumondii (strain DSM 15139 / CIP 105565 / TT01) (Photorhabdus luminescens subsp. laumondii)).